The following is a 160-amino-acid chain: SsrA-binding protein (160 aa).

The protein belongs to the SmpB family.

The protein resides in the cytoplasm. Its function is as follows. Required for rescue of stalled ribosomes mediated by trans-translation. Binds to transfer-messenger RNA (tmRNA), required for stable association of tmRNA with ribosomes. tmRNA and SmpB together mimic tRNA shape, replacing the anticodon stem-loop with SmpB. tmRNA is encoded by the ssrA gene; the 2 termini fold to resemble tRNA(Ala) and it encodes a 'tag peptide', a short internal open reading frame. During trans-translation Ala-aminoacylated tmRNA acts like a tRNA, entering the A-site of stalled ribosomes, displacing the stalled mRNA. The ribosome then switches to translate the ORF on the tmRNA; the nascent peptide is terminated with the 'tag peptide' encoded by the tmRNA and targeted for degradation. The ribosome is freed to recommence translation, which seems to be the essential function of trans-translation. The protein is SsrA-binding protein of Yersinia enterocolitica serotype O:8 / biotype 1B (strain NCTC 13174 / 8081).